The following is a 1119-amino-acid chain: G8 domain-containing protein DDB_G0288475 (1119 aa).

The signal sequence occupies residues 1-22 (MKYSSFLLLFIYIFFILNNINA). Residues 276-404 (TIWTSGVVPL…YHNTWTKLAA (129 aa)) form the G8 domain. N-linked (GlcNAc...) asparagine glycosylation is found at Asn308, Asn559, Asn736, Asn854, Asn968, Asn1035, Asn1056, and Asn1070.

The protein belongs to the comF family.

The protein localises to the secreted. This Dictyostelium discoideum (Social amoeba) protein is G8 domain-containing protein DDB_G0288475.